Reading from the N-terminus, the 451-residue chain is Cyclin-dependent kinase 14 (451 aa).

2 positions are modified to phosphoserine: Ser60 and Ser77. The segment at 84–114 (NFKTSSTGKESPKVRRHSSPSSPTSPKFGKA) is disordered. Ser116 is subject to Phosphoserine. The 285-residue stretch at 117 to 401 (YEKLEKLGEG…AQAALSHEYF (285 aa)) folds into the Protein kinase domain. ATP contacts are provided by residues 123-131 (LGEGSYATV) and Lys146. Catalysis depends on Asp238, which acts as the Proton acceptor.

This sequence belongs to the protein kinase superfamily. CMGC Ser/Thr protein kinase family. CDC2/CDKX subfamily. In terms of assembly, found in a complex with LRP6, CCNY and CAPRIN2 during G2/M stage; CAPRIN2 functions as a scaffold for the complex by binding to CCNY via its N terminus and to CDK14 via its C terminus. Interacts with CCNY; CCNY mediates its recruitment to the plasma membrane and promotes phosphorylation of LRP6. Interacts with CCDN3 and CDKN1A. Interacts with SEPT8. Interacts with 14-3-3 proteina YWHAB, YWHAE, YWHAH and YWHAQ.

Its subcellular location is the cell membrane. It localises to the cytoplasm. The protein resides in the nucleus. The catalysed reaction is L-seryl-[protein] + ATP = O-phospho-L-seryl-[protein] + ADP + H(+). It catalyses the reaction L-threonyl-[protein] + ATP = O-phospho-L-threonyl-[protein] + ADP + H(+). Its activity is regulated as follows. Serine/threonine-protein kinase activity is promoted by associated cyclins CCDN3 and CCNY and repressed by CDKN1A. Its function is as follows. Serine/threonine-protein kinase involved in the control of the eukaryotic cell cycle, whose activity is controlled by an associated cyclin. Acts as a cell-cycle regulator of Wnt signaling pathway during G2/M phase by mediating the phosphorylation of LRP6 at 'Ser-1490', leading to the activation of the Wnt signaling pathway. Acts as a regulator of cell cycle progression and cell proliferation via its interaction with CCDN3. Phosphorylates RB1 in vitro, however the relevance of such result remains to be confirmed in vivo. May also play a role in meiosis, neuron differentiation and may indirectly act as a negative regulator of insulin-responsive glucose transport. In Plecturocebus moloch (Dusky titi monkey), this protein is Cyclin-dependent kinase 14 (CDK14).